The primary structure comprises 165 residues: Sorting nexin-12 (165 aa).

Positions 1 to 20 are disordered; sequence MSDTAVADTRRLNSKPQDLT. Ser2 bears the N-acetylserine mark. A Phosphotyrosine modification is found at Tyr23. The PX domain occupies 28 to 151; sequence NFLEIDIFNP…HMFLQEEAID (124 aa). 4 residues coordinate a 1,2-diacyl-sn-glycero-3-phospho-(1D-myo-inositol-3-phosphate): Arg71, Ser73, Lys96, and Arg118. Ser73 carries the post-translational modification Phosphoserine.

It belongs to the sorting nexin family.

Its subcellular location is the membrane. Its function is as follows. May be involved in several stages of intracellular trafficking. The chain is Sorting nexin-12 (Snx12) from Mus musculus (Mouse).